Here is a 352-residue protein sequence, read N- to C-terminus: Transcription factor RSL2 (352 aa).

Residues 160-169 (SVTTTKSLTG) are compositionally biased toward polar residues. The tract at residues 160-277 (SVTTTKSLTG…ASRGAATDPQ (118 aa)) is disordered. The segment covering 183–192 (KRARVNKRAQ) has biased composition (basic residues). Residues 223-232 (SRQNSSTTFC) are compositionally biased toward polar residues. The interval 272–285 (AATDPQSLYARKRR) is basic motif. A bHLH domain is found at 272–321 (AATDPQSLYARKRRERINERLRILQNLVPNGTKVDISTMLEEAVHYVKFL). Residues 286–321 (ERINERLRILQNLVPNGTKVDISTMLEEAVHYVKFL) form a helix-loop-helix motif region.

In terms of assembly, homodimer. Expressed in roots. Expressed in root epidermal hair cells.

It localises to the nucleus. In terms of biological role, transcription factor involved in the regulation of root hair elongation. Does not seem to be a direct transcriptional target of RHD6 and RSL1. Involved in the regulation of root hair elongation in response to low phosphate. This is Transcription factor RSL2 from Arabidopsis thaliana (Mouse-ear cress).